The following is a 115-amino-acid chain: Large ribosomal subunit protein bL20c (115 aa).

Belongs to the bacterial ribosomal protein bL20 family.

Its subcellular location is the plastid. It localises to the chloroplast. In terms of biological role, binds directly to 23S ribosomal RNA and is necessary for the in vitro assembly process of the 50S ribosomal subunit. It is not involved in the protein synthesizing functions of that subunit. The sequence is that of Large ribosomal subunit protein bL20c from Angiopteris evecta (Mule's foot fern).